A 430-amino-acid chain; its full sequence is Tol-Pal system protein TolB (430 aa).

The signal sequence occupies residues 1-21 (MRRFVTLLIALLCLSATAVQA).

The protein belongs to the TolB family. In terms of assembly, the Tol-Pal system is composed of five core proteins: the inner membrane proteins TolA, TolQ and TolR, the periplasmic protein TolB and the outer membrane protein Pal. They form a network linking the inner and outer membranes and the peptidoglycan layer.

The protein resides in the periplasm. Its function is as follows. Part of the Tol-Pal system, which plays a role in outer membrane invagination during cell division and is important for maintaining outer membrane integrity. The sequence is that of Tol-Pal system protein TolB from Syntrophotalea carbinolica (strain DSM 2380 / NBRC 103641 / GraBd1) (Pelobacter carbinolicus).